The chain runs to 434 residues: Putative nuclease OPG089 (434 aa).

Residues aspartate 33, aspartate 74, glutamate 168, aspartate 170, aspartate 196, and aspartate 198 each coordinate Mg(2+).

It belongs to the XPG/RAD2 endonuclease family. FEN1 subfamily. Requires Mg(2+) as cofactor.

The protein localises to the virion. Its function is as follows. Putative nuclease that seems to be required for double-strand break repair, homologous recombination, and production of full-length viral genomic DNA. This Vaccinia virus (strain Western Reserve) (VACV) protein is Putative nuclease OPG089 (OPG089).